Reading from the N-terminus, the 134-residue chain is Phosphoribosyl-AMP cyclohydrolase (134 aa).

Asp77 provides a ligand contact to Mg(2+). A Zn(2+)-binding site is contributed by Cys78. 2 residues coordinate Mg(2+): Asp79 and Asp81. Residues Cys95 and Cys102 each contribute to the Zn(2+) site.

This sequence belongs to the PRA-CH family. In terms of assembly, homodimer. Mg(2+) serves as cofactor. It depends on Zn(2+) as a cofactor.

It localises to the cytoplasm. The catalysed reaction is 1-(5-phospho-beta-D-ribosyl)-5'-AMP + H2O = 1-(5-phospho-beta-D-ribosyl)-5-[(5-phospho-beta-D-ribosylamino)methylideneamino]imidazole-4-carboxamide. The protein operates within amino-acid biosynthesis; L-histidine biosynthesis; L-histidine from 5-phospho-alpha-D-ribose 1-diphosphate: step 3/9. In terms of biological role, catalyzes the hydrolysis of the adenine ring of phosphoribosyl-AMP. This is Phosphoribosyl-AMP cyclohydrolase from Pseudomonas aeruginosa (strain UCBPP-PA14).